A 658-amino-acid polypeptide reads, in one-letter code: Glycogen debranching enzyme (658 aa).

D336 (nucleophile) is an active-site residue. E371 functions as the Proton donor in the catalytic mechanism. The disordered stretch occupies residues 459–484 (EANGEENRDGTNSNYSDNHGKEGLGG).

The protein belongs to the glycosyl hydrolase 13 family.

It carries out the reaction Hydrolysis of (1-&gt;6)-alpha-D-glucosidic linkages to branches with degrees of polymerization of three or four glucose residues in limit dextrin.. It functions in the pathway glycan degradation; glycogen degradation. In terms of biological role, removes maltotriose and maltotetraose chains that are attached by 1,6-alpha-linkage to the limit dextrin main chain, generating a debranched limit dextrin. The sequence is that of Glycogen debranching enzyme from Salmonella dublin (strain CT_02021853).